A 1049-amino-acid polypeptide reads, in one-letter code: ABC transporter ATM1 (1049 aa).

Residues 1–90 (MRSFYNKCFT…NIFKNKGRLY (90 aa)) constitute a mitochondrion transit peptide. 6 helical membrane passes run 357 to 377 (IFCS…TPIL), 397 to 419 (IYST…VLSS), 481 to 501 (VMVF…YILT), 506 to 526 (YTVS…TTLI), 591 to 611 (FLNF…MYLT), and 619 to 639 (IFPF…AMPL). The region spanning 360 to 651 (SLFFLLCSKM…FGTIYRETKL (292 aa)) is the ABC transmembrane type-1 domain. Positions 807–1043 (LKNHKIINNS…NHFYREYYDS (237 aa)) constitute an ABC transporter domain. 843 to 850 (GKSGSGKS) is a binding site for ATP.

It belongs to the ABC transporter superfamily. ABCB family. Heavy Metal importer (TC 3.A.1.210) subfamily. As to quaternary structure, homodimer. Interacts with ISCU. Interacts with IscA2. Interacts with NBP35. Interacts with mHCF101.

The protein resides in the mitochondrion membrane. ATPase activity is stimulated by reduced glutathione. Functionally, transports glutathione-coordinated [4Fe-4S] iron-sulfur clusters in an ATP-dependent manner. Required for optimal parasite growth during erythrocytic stages. The sequence is that of ABC transporter ATM1 from Plasmodium falciparum (isolate 3D7).